A 133-amino-acid chain; its full sequence is C-C motif chemokine 21b (133 aa).

The signal sequence occupies residues 1–23; sequence MAQMMTLSLLSLVLALCIPWTQG. 3 disulfides stabilise this stretch: cysteine 31-cysteine 57, cysteine 32-cysteine 75, and cysteine 103-cysteine 122. The tract at residues 87–133 is disordered; it reads MRRLDQPPAPGKQSPGCRKNRGTSKSGKKGKGSKGCKRTEQTQPSRG. The tract at residues 98-133 is C-terminal basic extension; it reads KQSPGCRKNRGTSKSGKKGKGSKGCKRTEQTQPSRG. Over residues 104-122 the composition is skewed to basic residues; the sequence is RKNRGTSKSGKKGKGSKGC.

The protein belongs to the intercrine beta (chemokine CC) family. In terms of assembly, binds to CCR7 and to CXCR3. Interacts with PDPN; relocalizes PDPN to the basolateral membrane. Interacts with GPR174. In terms of tissue distribution, expressed strongly in lung, spleen, thymus, peripheral and mesentric lymph nodes. Also expressed in the testis, kidney, liver, and heart.

Its subcellular location is the secreted. Its function is as follows. Inhibits hemopoiesis and stimulates chemotaxis. Chemotactic in vitro for thymocytes and activated T-cells, but not for B-cells, macrophages, or neutrophils. Potent mesangial cell chemoattractant. Shows preferential activity towards naive T-cells. May play a role in mediating homing of lymphocytes to secondary lymphoid organs. This is C-C motif chemokine 21b (Ccl21b) from Mus musculus (Mouse).